A 368-amino-acid chain; its full sequence is Phosphate acyltransferase (368 aa).

This sequence belongs to the PlsX family. In terms of assembly, homodimer. Probably interacts with PlsY.

Its subcellular location is the cytoplasm. It carries out the reaction a fatty acyl-[ACP] + phosphate = an acyl phosphate + holo-[ACP]. It participates in lipid metabolism; phospholipid metabolism. In terms of biological role, catalyzes the reversible formation of acyl-phosphate (acyl-PO(4)) from acyl-[acyl-carrier-protein] (acyl-ACP). This enzyme utilizes acyl-ACP as fatty acyl donor, but not acyl-CoA. The sequence is that of Phosphate acyltransferase from Granulibacter bethesdensis (strain ATCC BAA-1260 / CGDNIH1).